We begin with the raw amino-acid sequence, 258 residues long: 5'-nucleotidase SurE (258 aa).

The a divalent metal cation site is built by Asp8, Asp9, Ser40, and Asn93.

This sequence belongs to the SurE nucleotidase family. The cofactor is a divalent metal cation.

It is found in the cytoplasm. It catalyses the reaction a ribonucleoside 5'-phosphate + H2O = a ribonucleoside + phosphate. Nucleotidase that shows phosphatase activity on nucleoside 5'-monophosphates. The sequence is that of 5'-nucleotidase SurE from Afipia carboxidovorans (strain ATCC 49405 / DSM 1227 / KCTC 32145 / OM5) (Oligotropha carboxidovorans).